We begin with the raw amino-acid sequence, 270 residues long: Formamidopyrimidine-DNA glycosylase (270 aa).

Residue Pro-2 is the Schiff-base intermediate with DNA of the active site. The active-site Proton donor is Glu-3. The Proton donor; for beta-elimination activity role is filled by Lys-58. The DNA site is built by His-91, Arg-110, and Arg-151. The FPG-type zinc-finger motif lies at Phe-236 to Arg-270. The Proton donor; for delta-elimination activity role is filled by Arg-260.

This sequence belongs to the FPG family. Monomer. Zn(2+) serves as cofactor.

It carries out the reaction Hydrolysis of DNA containing ring-opened 7-methylguanine residues, releasing 2,6-diamino-4-hydroxy-5-(N-methyl)formamidopyrimidine.. It catalyses the reaction 2'-deoxyribonucleotide-(2'-deoxyribose 5'-phosphate)-2'-deoxyribonucleotide-DNA = a 3'-end 2'-deoxyribonucleotide-(2,3-dehydro-2,3-deoxyribose 5'-phosphate)-DNA + a 5'-end 5'-phospho-2'-deoxyribonucleoside-DNA + H(+). Its function is as follows. Involved in base excision repair of DNA damaged by oxidation or by mutagenic agents. Acts as a DNA glycosylase that recognizes and removes damaged bases. Has a preference for oxidized purines, such as 7,8-dihydro-8-oxoguanine (8-oxoG). Has AP (apurinic/apyrimidinic) lyase activity and introduces nicks in the DNA strand. Cleaves the DNA backbone by beta-delta elimination to generate a single-strand break at the site of the removed base with both 3'- and 5'-phosphates. This is Formamidopyrimidine-DNA glycosylase from Pseudomonas putida (strain W619).